We begin with the raw amino-acid sequence, 248 residues long: Sugar fermentation stimulation protein homolog (248 aa).

The protein belongs to the SfsA family.

In Methylorubrum extorquens (strain CM4 / NCIMB 13688) (Methylobacterium extorquens), this protein is Sugar fermentation stimulation protein homolog.